The sequence spans 312 residues: DNA-directed RNA polymerase subunit alpha (312 aa).

The tract at residues 1 to 229 (MLQYQIDRIE…ELFQPLATVT (229 aa)) is alpha N-terminal domain (alpha-NTD). Residues 246–312 (IPLEELNLSV…ISIPQSRTSA (67 aa)) are alpha C-terminal domain (alpha-CTD).

This sequence belongs to the RNA polymerase alpha chain family. As to quaternary structure, in cyanobacteria the RNAP catalytic core is composed of 2 alpha, 1 beta, 1 beta', 1 gamma and 1 omega subunit. When a sigma factor is associated with the core the holoenzyme is formed, which can initiate transcription.

The catalysed reaction is RNA(n) + a ribonucleoside 5'-triphosphate = RNA(n+1) + diphosphate. Its function is as follows. DNA-dependent RNA polymerase catalyzes the transcription of DNA into RNA using the four ribonucleoside triphosphates as substrates. The polypeptide is DNA-directed RNA polymerase subunit alpha (Parasynechococcus marenigrum (strain WH8102)).